The sequence spans 420 residues: Nucleobindin-2 (420 aa).

Positions 1 to 24 (MRWRTIQARYCFLLVPCVLTALEA) are cleaved as a signal peptide. The DNA-binding element occupies 171 to 223 (RTRHEEFKKYEMMKEHERREYLKTLSEEKRKEEEAKFAEMKRKHEDHPKVNHP). The tract at residues 194–225 (TLSEEKRKEEEAKFAEMKRKHEDHPKVNHPGS) is disordered. The interval 213–420 (KHEDHPKVNH…AGELKFEPHT (208 aa)) is binds to necdin. EF-hand domains follow at residues 241-276 (PNDF…ELDK) and 293-328 (ERLR…KEFL). Ca(2+) contacts are provided by aspartate 254, asparagine 256, aspartate 258, glutamate 265, aspartate 306, asparagine 308, aspartate 310, and glutamate 317. The GBA signature appears at 304–334 (EIDNNKDRLVTLEEFLRATEKKEFLEPDSWE). The residue at position 332 (serine 332) is a Phosphoserine. The segment covering 366–386 (DELQKQKEELQRQHDHLEAQK) has biased composition (basic and acidic residues). The segment at 366–420 (DELQKQKEELQRQHDHLEAQKQEYQQAVQQLEQKKFQQGIAPSGPAGELKFEPHT) is disordered. Residues 387-396 (QEYQQAVQQL) are compositionally biased toward low complexity.

It belongs to the nucleobindin family. Interacts (via GBA motif) with guanine nucleotide-binding protein G(i) alpha subunit GNAI3. Preferentially interacts with inactive rather than active GNAI3. Interaction with GNAI3 is inhibited when NUCB2 binds calcium, probably due to a conformational change which renders the GBA motif inaccessible. Binds to the postmitotic growth suppressor NDN; coexpression abolishes NUCB2 secretion. Interacts with MC4R.

It localises to the golgi apparatus. It is found in the endoplasmic reticulum. The protein localises to the nucleus envelope. The protein resides in the membrane. Its subcellular location is the cytoplasm. It localises to the secreted. Its function is as follows. Calcium-binding protein which may have a role in calcium homeostasis. Acts as a non-receptor guanine nucleotide exchange factor which binds to and activates guanine nucleotide-binding protein (G-protein) alpha subunit GNAI3. Anorexigenic peptide, seems to play an important role in hypothalamic pathways regulating food intake and energy homeostasis, acting in a leptin-independent manner. May also exert hypertensive roles and modulate blood pressure through directly acting on peripheral arterial resistance. In intestinal epithelial cells, plays a role in the inhibition of hepatic glucose production via MC4R receptor leading to increased cyclic adenosine monophosphate (cAMP) levels and glucagon-like peptide 1 (GLP-1) secretion. This Rattus norvegicus (Rat) protein is Nucleobindin-2 (Nucb2).